The primary structure comprises 85 residues: F(1)-ATPase inhibitor IF(1), mitochondrial (85 aa).

The N-terminal 22 residues, 1 to 22 (MLPRSALARSLQLQRGVAARFY), are a transit peptide targeting the mitochondrion. Residues 41 to 84 (KRERATEDFFVRQREKEQLRHLKEQLEKQRKKIDSLENKIDSMT) adopt a coiled-coil conformation.

This sequence belongs to the ATPase inhibitor family. As to quaternary structure, monomer and homodimer. The protein aggregates less strongly with increasing pH.

The protein resides in the mitochondrion. Endogenous ATPase inhibitor, which inhibits specifically the reverse ATPase reaction of mitochondrial F(1)F(0)-type ATP synthase. It limits ATP depletion when the mitochondrial membrane potential falls below a threshold and the F(1)F(0)-ATP synthase starts hydrolyzing ATP to pump protons out of the mitochondrial matrix. Required to avoid the consumption of cellular ATP when the F(1)F(0)-ATP synthase enzyme acts as an ATP hydrolase. Functions through inserting its N-terminal part into the catalytically active F1-ATPase, thereby blocking its rotational movement and subsequently the ATP hydrolase activity. The protein is F(1)-ATPase inhibitor IF(1), mitochondrial (INH1) of Saccharomyces cerevisiae (strain ATCC 204508 / S288c) (Baker's yeast).